The following is a 698-amino-acid chain: Probable xyloglucan glycosyltransferase 2 (698 aa).

Helical transmembrane passes span 124-144 (GFLALSLLALAVELAAYWNGW) and 190-210 (ILLFVIQSMDRLVLCLGCFWI). Asp272 is a catalytic residue. Residues Asp331 and Asp333 each coordinate substrate. The active site involves Asp425. 4 helical membrane-spanning segments follow: residues 503–523 (LILPFYSFTLFCVILPLTMFV), 528–548 (LPVWVICYVPVCMSFLNILPS), 653–668 (LALSLLLLTAATRSLL), and 673–693 (IHFYFLLFQGVSFLFVGLDLI).

Belongs to the glycosyltransferase 2 family. Plant cellulose synthase-like C subfamily.

It localises to the golgi apparatus membrane. Functionally, probable beta-1,4-glucan synthase rather involved in the synthesis of the xyloglucan backbone than cellulose. Seems to work simultaneously with xyloglucan 6-xylosyltransferase. Xyloglucan is a noncellulosic polysaccharides of plant cell wall and consists of a glucan backbone substituted by xylose, galactose and fucose. This Oryza sativa subsp. indica (Rice) protein is Probable xyloglucan glycosyltransferase 2 (CSLC2).